Here is a 402-residue protein sequence, read N- to C-terminus: Putative neuropeptide Y receptor 11 (402 aa).

Over 1-45 (MGSVNESCDNYVEIFNKINYFFRDDQVINGTEYSPKEFGYFITFA) the chain is Extracellular. N-linked (GlcNAc...) asparagine glycosylation is found at Asn5 and Asn29. The helical transmembrane segment at 46–66 (YMLIILFGAIGNFLTIIVVIL) threads the bilayer. At 67–85 (NPAMRTTRNFFILNLALSD) the chain is on the cytoplasmic side. The chain crosses the membrane as a helical span at residues 86 to 106 (FFVCIVTAPTTLYTVLYMFWP). Over 107–122 (FSRTLCKIAGSLQGFN) the chain is Extracellular. Residues Cys112 and Cys194 are joined by a disulfide bond. Residues 123–143 (IFLSTFSIASIAVDRYVLIIF) form a helical membrane-spanning segment. The Cytoplasmic segment spans residues 144-152 (PTKRERQQN). The chain crosses the membrane as a helical span at residues 153 to 173 (LSFCFFIMIWVISLILAVPLL). Over 174 to 210 (QASDLTPVFVEPSCDLALYICHEQNEIWEKMIISKGT) the chain is Extracellular. Residues 211–231 (YTLAVLITQYAFPLFSLVFAY) form a helical membrane-spanning segment. Residues 232-272 (SRIAHRMKLRFANRNQNVTTNTNTSQRRRSVVERQRRTHLL) are Cytoplasmic-facing. Residues 273–293 (LVCVVAVFAVAWLPLNVFHIF) traverse the membrane as a helical segment. The Extracellular segment spans residues 294–306 (NTFELVNSFSVTT). A helical membrane pass occupies residues 307 to 328 (FSICHCLAMCSACLNPLIYAFF). The Cytoplasmic portion of the chain corresponds to 329–402 (NHNFRIEFMH…LSAMEQDEQL (74 aa)).

The protein belongs to the G-protein coupled receptor 1 family.

It is found in the cell membrane. In terms of biological role, could be a receptor for neuropeptide Y and peptide YY. The sequence is that of Putative neuropeptide Y receptor 11 (npr-11) from Caenorhabditis elegans.